We begin with the raw amino-acid sequence, 182 residues long: Superoxide dismutase [Cu-Zn] (182 aa).

Residues 1 to 19 form the signal peptide; the sequence is MFRTLTVVPLLALGLSLSA. Cys-20 is lipidated: N-palmitoyl cysteine. Cys-20 is lipidated: S-diacylglycerol cysteine. The Cu cation site is built by His-69, His-71, and His-95. Cys-76 and Cys-175 are oxidised to a cystine. Positions 91–118 are disordered; that stretch reads AAGGHFDPGASHNHDGPHARNDQGHGGD. Zn(2+)-binding residues include His-95, His-104, His-115, and Asp-118. Basic and acidic residues predominate over residues 102–115; that stretch reads HNHDGPHARNDQGH.

Belongs to the Cu-Zn superoxide dismutase family. Cu cation serves as cofactor. The cofactor is Zn(2+).

It localises to the cell membrane. It catalyses the reaction 2 superoxide + 2 H(+) = H2O2 + O2. Its function is as follows. Destroys radicals which are normally produced within the cells and which are toxic to biological systems. The sequence is that of Superoxide dismutase [Cu-Zn] (sodC) from Deinococcus radiodurans (strain ATCC 13939 / DSM 20539 / JCM 16871 / CCUG 27074 / LMG 4051 / NBRC 15346 / NCIMB 9279 / VKM B-1422 / R1).